A 452-amino-acid polypeptide reads, in one-letter code: Proline--tRNA ligase (452 aa).

Belongs to the class-II aminoacyl-tRNA synthetase family. ProS type 2 subfamily. As to quaternary structure, homodimer.

It localises to the cytoplasm. It catalyses the reaction tRNA(Pro) + L-proline + ATP = L-prolyl-tRNA(Pro) + AMP + diphosphate. In terms of biological role, catalyzes the attachment of proline to tRNA(Pro) in a two-step reaction: proline is first activated by ATP to form Pro-AMP and then transferred to the acceptor end of tRNA(Pro). This chain is Proline--tRNA ligase, found in Jannaschia sp. (strain CCS1).